The chain runs to 807 residues: Glycerol-3-phosphate acyltransferase (807 aa).

The HXXXXD motif signature appears at 305–310; sequence CHRSHM.

Belongs to the GPAT/DAPAT family.

It is found in the cell inner membrane. The catalysed reaction is sn-glycerol 3-phosphate + an acyl-CoA = a 1-acyl-sn-glycero-3-phosphate + CoA. It functions in the pathway phospholipid metabolism; CDP-diacylglycerol biosynthesis; CDP-diacylglycerol from sn-glycerol 3-phosphate: step 1/3. This is Glycerol-3-phosphate acyltransferase from Shigella boydii serotype 18 (strain CDC 3083-94 / BS512).